Consider the following 317-residue polypeptide: tRNA dimethylallyltransferase (317 aa).

Residue 13-20 participates in ATP binding; that stretch reads GPTASGKS. 15–20 is a binding site for substrate; that stretch reads TASGKS.

It belongs to the IPP transferase family. Monomer. Mg(2+) serves as cofactor.

It catalyses the reaction adenosine(37) in tRNA + dimethylallyl diphosphate = N(6)-dimethylallyladenosine(37) in tRNA + diphosphate. Functionally, catalyzes the transfer of a dimethylallyl group onto the adenine at position 37 in tRNAs that read codons beginning with uridine, leading to the formation of N6-(dimethylallyl)adenosine (i(6)A). This chain is tRNA dimethylallyltransferase, found in Kineococcus radiotolerans (strain ATCC BAA-149 / DSM 14245 / SRS30216).